Here is a 199-residue protein sequence, read N- to C-terminus: Recombination protein RecR (199 aa).

A C4-type zinc finger spans residues C57–C72. The Toprim domain maps to S80–S176.

Belongs to the RecR family.

Its function is as follows. May play a role in DNA repair. It seems to be involved in an RecBC-independent recombinational process of DNA repair. It may act with RecF and RecO. The sequence is that of Recombination protein RecR from Limosilactobacillus fermentum (strain NBRC 3956 / LMG 18251) (Lactobacillus fermentum).